A 548-amino-acid chain; its full sequence is Glucose-6-phosphate isomerase (548 aa).

The Proton donor role is filled by glutamate 355. Catalysis depends on residues histidine 386 and lysine 514.

Belongs to the GPI family.

The protein localises to the cytoplasm. The enzyme catalyses alpha-D-glucose 6-phosphate = beta-D-fructose 6-phosphate. It participates in carbohydrate biosynthesis; gluconeogenesis. The protein operates within carbohydrate degradation; glycolysis; D-glyceraldehyde 3-phosphate and glycerone phosphate from D-glucose: step 2/4. Catalyzes the reversible isomerization of glucose-6-phosphate to fructose-6-phosphate. The protein is Glucose-6-phosphate isomerase of Hamiltonella defensa subsp. Acyrthosiphon pisum (strain 5AT).